The following is a 124-amino-acid chain: Large ribosomal subunit protein bL21 (124 aa).

Positions 105–124 (NAPSIGPRVRKAKPAAEAAE) are disordered.

Belongs to the bacterial ribosomal protein bL21 family. As to quaternary structure, part of the 50S ribosomal subunit. Contacts protein L20.

In terms of biological role, this protein binds to 23S rRNA in the presence of protein L20. The chain is Large ribosomal subunit protein bL21 from Rhodopseudomonas palustris (strain BisA53).